An 853-amino-acid polypeptide reads, in one-letter code: Dynamin-A (853 aa).

A Dynamin-type G domain is found at 22-296 (PLDLPQIVVV…LMFHIRDTLP (275 aa)). A G1 motif region spans residues 32 to 39 (GSQSSGKS). Residue 32 to 40 (GSQSSGKSS) coordinates GTP. The interval 58-60 (VTR) is G2 motif. Positions 138–141 (DLPG) are G3 motif. The G4 motif stretch occupies residues 207-210 (TKLD). Residues 207 to 213 (TKLDLMD) and 238 to 241 (NRSQ) each bind GTP. Residues 237–240 (INRS) are G5 motif. Composition is skewed to low complexity over residues 523–569 (DQYQ…QQNQ) and 590–607 (PAQQ…KGPQ). The disordered stretch occupies residues 523-738 (DQYQQQQQQQ…RYQDDFYGRG (216 aa)). The span at 610-624 (PPNQSKPSSIPQNGP) shows a compositional bias: polar residues. Composition is skewed to low complexity over residues 625–635 (NNNNNNNNNNN) and 664–728 (NNSN…SSYN). The region spanning 762–853 (TELIRELLIS…IINEIRDFRN (92 aa)) is the GED domain.

Belongs to the TRAFAC class dynamin-like GTPase superfamily. Dynamin/Fzo/YdjA family.

The protein resides in the cytoplasm. Functionally, function in membrane trafficking processes along the endo-lysosomal pathway. The chain is Dynamin-A (dymA) from Dictyostelium discoideum (Social amoeba).